Consider the following 306-residue polypeptide: Tryptophan 2,3-dioxygenase (306 aa).

Substrate-binding positions include 75–79 (FIIQH), Tyr137, and Arg141. His264 contributes to the heme binding site. Substrate is bound at residue Thr278.

This sequence belongs to the tryptophan 2,3-dioxygenase family. As to quaternary structure, homotetramer. Requires heme as cofactor.

It carries out the reaction L-tryptophan + O2 = N-formyl-L-kynurenine. It participates in amino-acid degradation; L-tryptophan degradation via kynurenine pathway; L-kynurenine from L-tryptophan: step 1/2. Functionally, heme-dependent dioxygenase that catalyzes the oxidative cleavage of the L-tryptophan (L-Trp) pyrrole ring and converts L-tryptophan to N-formyl-L-kynurenine. Catalyzes the oxidative cleavage of the indole moiety. This is Tryptophan 2,3-dioxygenase from Paraburkholderia phytofirmans (strain DSM 17436 / LMG 22146 / PsJN) (Burkholderia phytofirmans).